We begin with the raw amino-acid sequence, 206 residues long: Small ribosomal subunit protein uS4 (206 aa).

The 64-residue stretch at arginine 94–isoleucine 157 folds into the S4 RNA-binding domain.

Belongs to the universal ribosomal protein uS4 family. As to quaternary structure, part of the 30S ribosomal subunit. Contacts protein S5. The interaction surface between S4 and S5 is involved in control of translational fidelity.

Functionally, one of the primary rRNA binding proteins, it binds directly to 16S rRNA where it nucleates assembly of the body of the 30S subunit. In terms of biological role, with S5 and S12 plays an important role in translational accuracy. This chain is Small ribosomal subunit protein uS4, found in Roseiflexus sp. (strain RS-1).